Here is a 524-residue protein sequence, read N- to C-terminus: MVKILVTDPLHEDAIKILEEVGEVEVATGLTKEELLEKIKDADVLVVRSGTKVTRDVIEKAEKLKVIGRAGVGVDNIDVEAATEKGIIVVNAPDASSISVAELTMGLMLAAARNIPQATASLKRGEWDRKRFKGIELYGKTLGVIGLGRIGQQVVKRAKAFGMNIIGYDPYIPKEVAESMGVELVDDINELCKRADFITLHVPLTPKTRHIIGREQIALMKKNAIIVNCARGGLIDEKALYEALKEGKIRAAALDVFEEEPPKDNPLLTLDNVIGTPHQGASTEEAQKAAGTIVAEQIKKVLRGELAENVVNMPNIPQEKLGKLKPYMLLAEMLGNIVMQVLDGSVNRVELIYSGELAKEKTDLIKRAFLKGLLSPILLAGINLVNAPIIAKNRNINVVESSTSEEKYGNAIKITAESDKKKFSIVGAIINNKPVILEVDGYEVSFIPEGVLAIIKHIDRPGTIGRVCITLGDYGINIASMQVGRKEPGGESVMLLNLDHTVPEEVIEKIKEIPNIKDVAVINL.

NAD(+) is bound by residues 149–150 (RI), aspartate 169, 229–231 (CAR), and aspartate 255. Arginine 231 is an active-site residue. The active site involves glutamate 260. Histidine 278 acts as the Proton donor in catalysis. 278–281 (HQGA) provides a ligand contact to NAD(+). In terms of domain architecture, ACT spans 452 to 524 (LAIIKHIDRP…NIKDVAVINL (73 aa)).

Belongs to the D-isomer specific 2-hydroxyacid dehydrogenase family.

The enzyme catalyses (2R)-3-phosphoglycerate + NAD(+) = 3-phosphooxypyruvate + NADH + H(+). It participates in amino-acid biosynthesis; L-serine biosynthesis; L-serine from 3-phospho-D-glycerate: step 1/3. This chain is D-3-phosphoglycerate dehydrogenase (serA), found in Methanocaldococcus jannaschii (strain ATCC 43067 / DSM 2661 / JAL-1 / JCM 10045 / NBRC 100440) (Methanococcus jannaschii).